A 1131-amino-acid polypeptide reads, in one-letter code: Tyrosine-protein kinase JAK2 (1131 aa).

The interaction with cytokine/interferon/growth hormone receptors stretch occupies residues 1–239 (MGMACLTMTE…RYRFRRFIEQ (239 aa)). Residues 37 to 380 (PVLQVYLYHS…GYYRLTADAH (344 aa)) form the FERM domain. Residue Tyr119 is modified to Phosphotyrosine; by autocatalysis. 2 positions are modified to phosphotyrosine: Tyr372 and Tyr373. The SH2; atypical domain occupies 401–482 (HGPISMDFAI…NLKDLLNCYQ (82 aa)). Residue Ser523 is modified to Phosphoserine. Residues 545–809 (LIFNESLGQG…AIIRDLNSLF (265 aa)) enclose the Protein kinase 1 domain. Residues Tyr570 and Tyr813 each carry the phosphotyrosine modification. The 278-residue stretch at 849 to 1126 (LKFLQQLGKG…RDLALRVDQI (278 aa)) folds into the Protein kinase 2 domain. ATP is bound at residue 855–863 (LGKGNFGSV). Residue Tyr868 is modified to Phosphotyrosine; by autocatalysis. Residue Lys882 participates in ATP binding. Phosphotyrosine; by autocatalysis occurs at positions 966 and 972. The Proton acceptor role is filled by Asp976. Phosphotyrosine; by autocatalysis is present on residues Tyr1007 and Tyr1008.

The protein belongs to the protein kinase superfamily. Tyr protein kinase family. JAK subfamily. Interacts with IL23R, SKB1 and STAM2. Interacts with EPOR. Interacts with LYN. Interacts with SIRPA. Interacts with SH2B1. Interacts with TEC. Interacts with IFNGR2 (via intracellular domain). Interacts with LEPR (Isoform B). Interacts with HSP90AB1; promotes functional activation in a heat shock-dependent manner. Interacts with STRA6. Interacts with ASB2; the interaction targets JAK2 for Notch-induced proteasomal degradation. Requires Mg(2+) as cofactor. In terms of processing, autophosphorylated, leading to regulate its activity. Leptin promotes phosphorylation on tyrosine residues, including phosphorylation on Tyr-813. Autophosphorylation on Tyr-119 in response to EPO down-regulates its kinase activity. Autophosphorylation on Tyr-868, Tyr-966 and Tyr-972 in response to growth hormone (GH) are required for maximal kinase activity. Also phosphorylated by TEC. Phosphorylated on tyrosine residues in response to interferon gamma signaling. Phosphorylated on tyrosine residues in response to a signaling cascade that is activated by increased cellular retinol. Post-translationally, undergoes Notch-induced ubiquitination and subsequent proteasomal degradation which is mediated by ASB1 or ASB2, the substrate-recognition components of probable ECS E3 ubiquitin-protein ligase complexes.

It is found in the endomembrane system. It localises to the cytoplasm. Its subcellular location is the nucleus. The enzyme catalyses L-tyrosyl-[protein] + ATP = O-phospho-L-tyrosyl-[protein] + ADP + H(+). Its activity is regulated as follows. Regulated by autophosphorylation, can both activate or decrease activity. Heme regulates its activity by enhancing the phosphorylation on Tyr-1007 and Tyr-1008. In terms of biological role, non-receptor tyrosine kinase involved in various processes such as cell growth, development, differentiation or histone modifications. Mediates essential signaling events in both innate and adaptive immunity. In the cytoplasm, plays a pivotal role in signal transduction via its association with type I receptors such as growth hormone (GHR), prolactin (PRLR), leptin (LEPR), erythropoietin (EPOR), thrombopoietin (THPO); or type II receptors including IFN-alpha, IFN-beta, IFN-gamma and multiple interleukins. Following ligand-binding to cell surface receptors, phosphorylates specific tyrosine residues on the cytoplasmic tails of the receptor, creating docking sites for STATs proteins. Subsequently, phosphorylates the STATs proteins once they are recruited to the receptor. Phosphorylated STATs then form homodimer or heterodimers and translocate to the nucleus to activate gene transcription. For example, cell stimulation with erythropoietin (EPO) during erythropoiesis leads to JAK2 autophosphorylation, activation, and its association with erythropoietin receptor (EPOR) that becomes phosphorylated in its cytoplasmic domain. Then, STAT5 (STAT5A or STAT5B) is recruited, phosphorylated and activated by JAK2. Once activated, dimerized STAT5 translocates into the nucleus and promotes the transcription of several essential genes involved in the modulation of erythropoiesis. Part of a signaling cascade that is activated by increased cellular retinol and that leads to the activation of STAT5 (STAT5A or STAT5B). In addition, JAK2 mediates angiotensin-2-induced ARHGEF1 phosphorylation. Plays a role in cell cycle by phosphorylating CDKN1B. Cooperates with TEC through reciprocal phosphorylation to mediate cytokine-driven activation of FOS transcription. In the nucleus, plays a key role in chromatin by specifically mediating phosphorylation of 'Tyr-41' of histone H3 (H3Y41ph), a specific tag that promotes exclusion of CBX5 (HP1 alpha) from chromatin. Up-regulates the potassium voltage-gated channel activity of KCNA3. This chain is Tyrosine-protein kinase JAK2, found in Sus scrofa (Pig).